A 72-amino-acid polypeptide reads, in one-letter code: UPF0352 protein Patl_3379 (72 aa).

This sequence belongs to the UPF0352 family.

In Pseudoalteromonas atlantica (strain T6c / ATCC BAA-1087), this protein is UPF0352 protein Patl_3379.